A 491-amino-acid chain; its full sequence is uncharacterized protein (491 aa).

267-274 (GIQGTGKS) lines the ATP pocket.

It belongs to the AAA ATPase family. Highly divergent.

The protein localises to the plastid. Its subcellular location is the chloroplast. This is an uncharacterized protein from Gracilaria tenuistipitata var. liui (Red alga).